The primary structure comprises 625 residues: DNA-directed RNA polymerase subunit gamma (625 aa).

Residues cysteine 71, cysteine 73, cysteine 86, and cysteine 89 each contribute to the Zn(2+) site. Mg(2+)-binding residues include aspartate 467, aspartate 469, and aspartate 471.

The protein belongs to the RNA polymerase beta' chain family. RpoC1 subfamily. In terms of assembly, in cyanobacteria the RNAP catalytic core is composed of 2 alpha, 1 beta, 1 beta', 1 gamma and 1 omega subunit. When a sigma factor is associated with the core the holoenzyme is formed, which can initiate transcription. Mg(2+) serves as cofactor. Zn(2+) is required as a cofactor.

The enzyme catalyses RNA(n) + a ribonucleoside 5'-triphosphate = RNA(n+1) + diphosphate. Its function is as follows. DNA-dependent RNA polymerase catalyzes the transcription of DNA into RNA using the four ribonucleoside triphosphates as substrates. This chain is DNA-directed RNA polymerase subunit gamma, found in Rippkaea orientalis (strain PCC 8801 / RF-1) (Cyanothece sp. (strain PCC 8801)).